Reading from the N-terminus, the 416-residue chain is D-amino acid dehydrogenase (416 aa).

3–17 (VIVLGAGIIGVTSAY) is an FAD binding site.

This sequence belongs to the DadA oxidoreductase family. FAD is required as a cofactor.

It catalyses the reaction a D-alpha-amino acid + A + H2O = a 2-oxocarboxylate + AH2 + NH4(+). Its pathway is amino-acid degradation; D-alanine degradation; NH(3) and pyruvate from D-alanine: step 1/1. Oxidative deamination of D-amino acids. The chain is D-amino acid dehydrogenase from Sinorhizobium medicae (strain WSM419) (Ensifer medicae).